Here is a 327-residue protein sequence, read N- to C-terminus: DNA-directed RNA polymerase subunit alpha (327 aa).

The alpha N-terminal domain (alpha-NTD) stretch occupies residues 1–243; the sequence is MEKFLKYEIK…EHLNPIVNVN (243 aa). The alpha C-terminal domain (alpha-CTD) stretch occupies residues 260 to 327; that stretch reads RVRSFAKQIE…VHELGLKLRS (68 aa).

It belongs to the RNA polymerase alpha chain family. In terms of assembly, homodimer. The RNAP catalytic core consists of 2 alpha, 1 beta, 1 beta' and 1 omega subunit. When a sigma factor is associated with the core the holoenzyme is formed, which can initiate transcription.

The enzyme catalyses RNA(n) + a ribonucleoside 5'-triphosphate = RNA(n+1) + diphosphate. Its function is as follows. DNA-dependent RNA polymerase catalyzes the transcription of DNA into RNA using the four ribonucleoside triphosphates as substrates. The chain is DNA-directed RNA polymerase subunit alpha from Mycoplasma pneumoniae (strain ATCC 29342 / M129 / Subtype 1) (Mycoplasmoides pneumoniae).